The sequence spans 1125 residues: Speract receptor (1125 aa).

The N-terminal stretch at 1–21 (MAHARHLFLFMVAFTITMVIA) is a signal peptide. Topologically, residues 22–510 (RLDFNPTIIN…GELCTNWALY (489 aa)) are extracellular. N-linked (GlcNAc...) asparagine glycans are attached at residues N185 and N409. A helical transmembrane segment spans residues 511 to 531 (LGASIPTFLIIFGGLIGFFIY). At 532–1125 (RKRAYEAALD…AANRVIPDDV (594 aa)) the chain is on the cytoplasmic side. The Protein kinase domain occupies 571 to 839 (MSAISVISNA…PNIMAVRTML (269 aa)). One can recognise a Guanylate cyclase domain in the interval 914–1044 (SIFFSDIVGF…DTVNTASRME (131 aa)).

Belongs to the adenylyl cyclase class-4/guanylyl cyclase family.

It is found in the membrane. It carries out the reaction GTP = 3',5'-cyclic GMP + diphosphate. Implicated as a cell-surface receptor on spermatozoa for 'speract' a chemotactic peptide, and on various other cells as a receptor for atrial natriuretic peptide. This Strongylocentrotus purpuratus (Purple sea urchin) protein is Speract receptor.